The chain runs to 215 residues: Thiamine import ATP-binding protein ThiQ (215 aa).

In terms of domain architecture, ABC transporter spans 2-215; sequence IYLNNVILND…GQISQLQKGV (214 aa). 32–39 contributes to the ATP binding site; sequence GESGAGKS.

This sequence belongs to the ABC transporter superfamily. Thiamine importer (TC 3.A.1.19.1) family. As to quaternary structure, the complex is composed of two ATP-binding proteins (ThiQ), two transmembrane proteins (ThiP) and a solute-binding protein (ThiB).

The protein localises to the cell inner membrane. It carries out the reaction thiamine(out) + ATP + H2O = thiamine(in) + ADP + phosphate + H(+). Functionally, part of the ABC transporter complex ThiBPQ involved in thiamine import. Responsible for energy coupling to the transport system. This Haemophilus influenzae (strain ATCC 51907 / DSM 11121 / KW20 / Rd) protein is Thiamine import ATP-binding protein ThiQ.